The following is a 203-amino-acid chain: Ras-related protein RABD2a (203 aa).

GTP is bound by residues 15–23, 33–40, 63–67, 121–124, and 151–153; these read GDSGVGKSC, YVESYIST, DTAGQ, NKSD, and SAK. Positions 37–45 match the Effector region motif; it reads YISTIGVDF. The interval 176-203 is disordered; it reads QPAGNNARPPTVQIRGQPVAQKNGCCST. S-geranylgeranyl cysteine attachment occurs at residues Cys200 and Cys201.

The protein belongs to the small GTPase superfamily. Rab family. In terms of assembly, does not interact with GC5.

Its subcellular location is the golgi apparatus. The protein resides in the trans-Golgi network membrane. It localises to the golgi apparatus membrane. Functionally, protein transport. Regulator of membrane traffic from the Golgi apparatus towards the endoplasmic reticulum (ER). In Arabidopsis thaliana (Mouse-ear cress), this protein is Ras-related protein RABD2a (RABD2A).